The chain runs to 275 residues: uncharacterized protein (275 aa).

An NADPH-binding site is contributed by Asp-45. Active-site proton donor residues include Tyr-50 and His-111. NADPH contacts are provided by Ser-139, Gln-162, Leu-191, Lys-196, Ser-232, Ser-233, and Arg-237.

This sequence belongs to the aldo/keto reductase family.

Its subcellular location is the cytoplasm. It localises to the nucleus. This is an uncharacterized protein from Schizosaccharomyces pombe (strain 972 / ATCC 24843) (Fission yeast).